We begin with the raw amino-acid sequence, 884 residues long: Protein translocase subunit SecA (884 aa).

ATP contacts are provided by residues Gln-83, 101 to 105 (GEGKT), and Asp-491.

It belongs to the SecA family.

It is found in the plastid. Its subcellular location is the chloroplast stroma. The protein resides in the chloroplast thylakoid membrane. The enzyme catalyses ATP + H2O + cellular proteinSide 1 = ADP + phosphate + cellular proteinSide 2.. In terms of biological role, has a central role in coupling the hydrolysis of ATP to the transfer of proteins across the thylakoid membrane. The chain is Protein translocase subunit SecA from Porphyra purpurea (Red seaweed).